Here is a 138-residue protein sequence, read N- to C-terminus: Acid shock protein (138 aa).

Positions 1–21 (MKKVLALIVAATMGLSSVAFA) are cleaved as a signal peptide. A propeptide spanning residues 22–85 (ADAVAPAAAA…TKKAPAQKAQ (64 aa)) is cleaved from the precursor. Residues 31 to 50 (APAATTTAAPAAAATKAPAK) show a composition bias toward low complexity. Positions 31–138 (APAATTTAAP…ATKKAAPAAK (108 aa)) are disordered. 2 stretches are compositionally biased toward basic residues: residues 51 to 77 (ATHH…KATK) and 122 to 131 (AAKKHHKATK).

This sequence belongs to the Asr family. Proteolytic processing gives rise to the active protein.

It is found in the periplasm. In terms of biological role, required for growth and/or survival at acidic conditions. In Serratia proteamaculans (strain 568), this protein is Acid shock protein.